The following is a 434-amino-acid chain: Trigger factor (434 aa).

The 86-residue stretch at glycine 161–proline 246 folds into the PPIase FKBP-type domain.

Belongs to the FKBP-type PPIase family. Tig subfamily.

It is found in the cytoplasm. The enzyme catalyses [protein]-peptidylproline (omega=180) = [protein]-peptidylproline (omega=0). Involved in protein export. Acts as a chaperone by maintaining the newly synthesized protein in an open conformation. Functions as a peptidyl-prolyl cis-trans isomerase. The chain is Trigger factor from Aromatoleum aromaticum (strain DSM 19018 / LMG 30748 / EbN1) (Azoarcus sp. (strain EbN1)).